Reading from the N-terminus, the 316-residue chain is Delta(1)-pyrroline-2-carboxylate reductase (316 aa).

The protein belongs to the ornithine cyclodeaminase/mu-crystallin family. In terms of assembly, homodimer.

It catalyses the reaction L-proline + NAD(+) = 1-pyrroline-2-carboxylate + NADH + H(+). The enzyme catalyses L-proline + NADP(+) = 1-pyrroline-2-carboxylate + NADPH + H(+). Catalyzes the reduction of Delta(1)-pyrroline-2-carboxylate (Pyr2C) to L-proline, using preferentially NADPH over NADH as the electron donor. Together with LhpH, is involved in a metabolic pathway that converts trans-3-hydroxy-L-proline (t3LHyp) to L-proline. To a much lesser extent, can also reduce Delta(1)-piperideine-2-carboxylate (Pip2C) to L-pipecolate in vitro; however, this activity has likely no physiological significance in vivo since C.psychrerythraea probably possesses no ability to metabolize D-lysine via the L-pipecolate pathway. Does not show ornithine cyclodeaminase (OCD) activity. This Colwellia psychrerythraea (strain 34H / ATCC BAA-681) (Vibrio psychroerythus) protein is Delta(1)-pyrroline-2-carboxylate reductase.